The sequence spans 205 residues: Basonuclin zinc finger protein homolog (205 aa).

2 C2H2-type zinc fingers span residues valine 107–histidine 130 and histidine 135–histidine 164. Residues glutamine 145–serine 168 are disordered.

As to expression, expressed in the VA and VB motor neurons and at lower levels in the SABV neuron pair.

It is found in the nucleus. Probable transcription factor. Involved in motor neuron fate determination and maintenance, acting as a transcriptional repressor to counteract gene activation by transcription factor unc-3 in a subset of motor neurons. Required throughout development to repress transcription by unc-3, probably acting by binding to specific promoter elements. Represses expression of DA and DB motor neuron-specific effector genes, such as unc-129 and unc-53, in VA and VB motor neurons. In Caenorhabditis elegans, this protein is Basonuclin zinc finger protein homolog.